A 432-amino-acid polypeptide reads, in one-letter code: Glutamyl-tRNA reductase (432 aa).

Substrate-binding positions include 49-52 (TCNR), serine 101, 106-108 (ESQ), and glutamine 112. The active-site Nucleophile is the cysteine 50. 181 to 186 (GTGETI) is an NADP(+) binding site.

Belongs to the glutamyl-tRNA reductase family. As to quaternary structure, homodimer.

The enzyme catalyses (S)-4-amino-5-oxopentanoate + tRNA(Glu) + NADP(+) = L-glutamyl-tRNA(Glu) + NADPH + H(+). Its pathway is porphyrin-containing compound metabolism; protoporphyrin-IX biosynthesis; 5-aminolevulinate from L-glutamyl-tRNA(Glu): step 1/2. Catalyzes the NADPH-dependent reduction of glutamyl-tRNA(Glu) to glutamate 1-semialdehyde (GSA). The chain is Glutamyl-tRNA reductase from Xylella fastidiosa (strain M12).